The following is a 259-amino-acid chain: Sugar fermentation stimulation protein homolog (259 aa).

It belongs to the SfsA family.

The sequence is that of Sugar fermentation stimulation protein homolog from Prochlorococcus marinus (strain MIT 9303).